Here is a 581-residue protein sequence, read N- to C-terminus: Proline--tRNA ligase (581 aa).

It belongs to the class-II aminoacyl-tRNA synthetase family. ProS type 1 subfamily. As to quaternary structure, homodimer.

Its subcellular location is the cytoplasm. It carries out the reaction tRNA(Pro) + L-proline + ATP = L-prolyl-tRNA(Pro) + AMP + diphosphate. Catalyzes the attachment of proline to tRNA(Pro) in a two-step reaction: proline is first activated by ATP to form Pro-AMP and then transferred to the acceptor end of tRNA(Pro). As ProRS can inadvertently accommodate and process non-cognate amino acids such as alanine and cysteine, to avoid such errors it has two additional distinct editing activities against alanine. One activity is designated as 'pretransfer' editing and involves the tRNA(Pro)-independent hydrolysis of activated Ala-AMP. The other activity is designated 'posttransfer' editing and involves deacylation of mischarged Ala-tRNA(Pro). The misacylated Cys-tRNA(Pro) is not edited by ProRS. The protein is Proline--tRNA ligase of Chlamydia trachomatis serovar A (strain ATCC VR-571B / DSM 19440 / HAR-13).